We begin with the raw amino-acid sequence, 353 residues long: Protein pelota homolog (353 aa).

Belongs to the eukaryotic release factor 1 family. Pelota subfamily. As to quaternary structure, monomer. A divalent metal cation serves as cofactor.

It is found in the cytoplasm. Functionally, may function in recognizing stalled ribosomes, interact with stem-loop structures in stalled mRNA molecules, and effect endonucleolytic cleavage of the mRNA. May play a role in the release non-functional ribosomes and degradation of damaged mRNAs. Has endoribonuclease activity. This is Protein pelota homolog from Methanothermobacter thermautotrophicus (strain ATCC 29096 / DSM 1053 / JCM 10044 / NBRC 100330 / Delta H) (Methanobacterium thermoautotrophicum).